A 249-amino-acid polypeptide reads, in one-letter code: Segregation and condensation protein A (249 aa).

Belongs to the ScpA family. Component of a cohesin-like complex composed of ScpA, ScpB and the Smc homodimer, in which ScpA and ScpB bind to the head domain of Smc. The presence of the three proteins is required for the association of the complex with DNA.

The protein resides in the cytoplasm. In terms of biological role, participates in chromosomal partition during cell division. May act via the formation of a condensin-like complex containing Smc and ScpB that pull DNA away from mid-cell into both cell halves. This is Segregation and condensation protein A from Listeria monocytogenes serotype 4a (strain HCC23).